The following is a 209-amino-acid chain: Thiamine-phosphate synthase (209 aa).

4-amino-2-methyl-5-(diphosphooxymethyl)pyrimidine contacts are provided by residues 41–45 (QLREK) and asparagine 73. Mg(2+) contacts are provided by aspartate 74 and aspartate 93. Serine 112 is a binding site for 4-amino-2-methyl-5-(diphosphooxymethyl)pyrimidine. Residue 138–140 (TGT) coordinates 2-[(2R,5Z)-2-carboxy-4-methylthiazol-5(2H)-ylidene]ethyl phosphate. 4-amino-2-methyl-5-(diphosphooxymethyl)pyrimidine is bound at residue lysine 141. 2-[(2R,5Z)-2-carboxy-4-methylthiazol-5(2H)-ylidene]ethyl phosphate contacts are provided by residues glycine 168 and 188 to 189 (VS).

It belongs to the thiamine-phosphate synthase family. Requires Mg(2+) as cofactor.

It catalyses the reaction 2-[(2R,5Z)-2-carboxy-4-methylthiazol-5(2H)-ylidene]ethyl phosphate + 4-amino-2-methyl-5-(diphosphooxymethyl)pyrimidine + 2 H(+) = thiamine phosphate + CO2 + diphosphate. The enzyme catalyses 2-(2-carboxy-4-methylthiazol-5-yl)ethyl phosphate + 4-amino-2-methyl-5-(diphosphooxymethyl)pyrimidine + 2 H(+) = thiamine phosphate + CO2 + diphosphate. It carries out the reaction 4-methyl-5-(2-phosphooxyethyl)-thiazole + 4-amino-2-methyl-5-(diphosphooxymethyl)pyrimidine + H(+) = thiamine phosphate + diphosphate. Its pathway is cofactor biosynthesis; thiamine diphosphate biosynthesis; thiamine phosphate from 4-amino-2-methyl-5-diphosphomethylpyrimidine and 4-methyl-5-(2-phosphoethyl)-thiazole: step 1/1. Condenses 4-methyl-5-(beta-hydroxyethyl)thiazole monophosphate (THZ-P) and 2-methyl-4-amino-5-hydroxymethyl pyrimidine pyrophosphate (HMP-PP) to form thiamine monophosphate (TMP). The chain is Thiamine-phosphate synthase from Alkaliphilus oremlandii (strain OhILAs) (Clostridium oremlandii (strain OhILAs)).